A 276-amino-acid chain; its full sequence is NH(3)-dependent NAD(+) synthetase (276 aa).

Position 43–50 (43–50) interacts with ATP; sequence GISGGVDS. Aspartate 49 provides a ligand contact to Mg(2+). A deamido-NAD(+)-binding site is contributed by arginine 146. Threonine 166 is an ATP binding site. Glutamate 171 provides a ligand contact to Mg(2+). The deamido-NAD(+) site is built by lysine 179 and aspartate 186. ATP-binding residues include lysine 195 and threonine 217. 266–267 serves as a coordination point for deamido-NAD(+); that stretch reads HK.

It belongs to the NAD synthetase family. As to quaternary structure, homodimer.

It carries out the reaction deamido-NAD(+) + NH4(+) + ATP = AMP + diphosphate + NAD(+) + H(+). It functions in the pathway cofactor biosynthesis; NAD(+) biosynthesis; NAD(+) from deamido-NAD(+) (ammonia route): step 1/1. Functionally, catalyzes the ATP-dependent amidation of deamido-NAD to form NAD. Uses ammonia as a nitrogen source. The polypeptide is NH(3)-dependent NAD(+) synthetase (Shewanella baltica (strain OS185)).